Here is a 776-residue protein sequence, read N- to C-terminus: Palmitoyltransferase AKR1 (776 aa).

The Cytoplasmic segment spans residues 1-311; the sequence is MDQEMTTVAS…MEGKLGPRNT (311 aa). A disordered region spans residues 38–58; the sequence is RLDEGSSIRGGELERDSQEVG. ANK repeat units follow at residues 68-97, 103-132, 137-166, 170-199, 203-232, and 236-265; these read CHDL…SLNL, QDVT…DIDA, LKAT…DPNI, QGFN…AIDE, DGHT…SVNS, and AGMT…SLDA. A helical transmembrane segment spans residues 312 to 332; sequence ILAIFLLPIAVLWLIFSTFKW. Residues 333 to 336 are Lumenal-facing; that stretch reads LPVY. The chain crosses the membrane as a helical span at residues 337 to 357; the sequence is VGVPFAIAEFMGMQYTVVLVL. At 358 to 368 the chain is on the cytoplasmic side; that stretch reads LGHIKAQDKVS. The helical transmembrane segment at 369–389 threads the bilayer; sequence TSNYFASIITASLIWVGYCWI. The Lumenal portion of the chain corresponds to 390–402; the sequence is SRFAVNTPGYAFS. A helical membrane pass occupies residues 403–423; the sequence is NLGFIIMFVGCCWTFWTAIVT. The Cytoplasmic portion of the chain corresponds to 424–498; it reads DPGFVPKGQQ…NCVGAKNHRS (75 aa). One can recognise a DHHC domain in the interval 454 to 504; the sequence is NFCIVCMARKPLRSKHCRTCNRCVARFDHHCPWIWNCVGAKNHRSFLLFVL. The active-site S-palmitoyl cysteine intermediate is the Cys-484. The helical transmembrane segment at 499-519 threads the bilayer; sequence FLLFVLFLIGGIILFIRLTIA. Residues 520–553 are Lumenal-facing; sequence YIQQNAPEYIPTPNPGLTTCDISTTLCQAGDFDP. Residues 554–574 form a helical membrane-spanning segment; that stretch reads FLLCMALWSTLQLTWTSVLAI. The Cytoplasmic segment spans residues 575 to 776; the sequence is SHLWQVSRQM…RYEVVSEQEV (202 aa). Residues 628–665 are disordered; it reads GAGEEAAGPPGAEAGPEGNALLPPPGGHVHGPQCRHGD. A compositionally biased stretch (low complexity) spans 629–645; that stretch reads AGEEAAGPPGAEAGPEG.

It belongs to the DHHC palmitoyltransferase family. AKR/ZDHHC17 subfamily.

It localises to the early endosome membrane. It is found in the golgi apparatus membrane. It carries out the reaction L-cysteinyl-[protein] + hexadecanoyl-CoA = S-hexadecanoyl-L-cysteinyl-[protein] + CoA. In terms of biological role, palmitoyltransferase specific for casein kinase 1. The chain is Palmitoyltransferase AKR1 (AKR1) from Cryptococcus neoformans var. neoformans serotype D (strain B-3501A) (Filobasidiella neoformans).